Consider the following 272-residue polypeptide: uncharacterized protein (272 aa).

Active-site residues include D71 and E163.

It belongs to the glycosyl hydrolase 25 family.

This is an uncharacterized protein from Escherichia coli O6:H1 (strain CFT073 / ATCC 700928 / UPEC).